Reading from the N-terminus, the 123-residue chain is UPF0102 protein CLD_2200 (123 aa).

Belongs to the UPF0102 family.

This chain is UPF0102 protein CLD_2200, found in Clostridium botulinum (strain Okra / Type B1).